A 332-amino-acid polypeptide reads, in one-letter code: Fructose-bisphosphate aldolase (332 aa).

D-glyceraldehyde 3-phosphate is bound at residue Ser-56. The active-site Proton donor is the Asp-93. Residues His-94, Asp-115, Glu-147, and His-191 each contribute to the Zn(2+) site. Gly-192 lines the dihydroxyacetone phosphate pocket. Position 234 (His-234) interacts with Zn(2+). Dihydroxyacetone phosphate contacts are provided by residues 235–237 (GAS) and 277–280 (NIDS).

The protein belongs to the class II fructose-bisphosphate aldolase family. Homodimer. The cofactor is Zn(2+).

The catalysed reaction is beta-D-fructose 1,6-bisphosphate = D-glyceraldehyde 3-phosphate + dihydroxyacetone phosphate. Its pathway is carbohydrate degradation; glycolysis; D-glyceraldehyde 3-phosphate and glycerone phosphate from D-glucose: step 4/4. Functionally, catalyzes the aldol condensation of dihydroxyacetone phosphate (DHAP or glycerone-phosphate) with glyceraldehyde 3-phosphate (G3P) to form fructose 1,6-bisphosphate (FBP) in gluconeogenesis and the reverse reaction in glycolysis. In Treponema pallidum (strain Nichols), this protein is Fructose-bisphosphate aldolase (fba).